A 407-amino-acid chain; its full sequence is Tyrosine--tRNA ligase (407 aa).

L-tyrosine is bound at residue Tyr-36. A 'HIGH' region motif is present at residues 41 to 50; that stretch reads PTADSLHIGH. Residues Tyr-169 and Gln-173 each contribute to the L-tyrosine site. The 'KMSKS' region signature appears at 229–233; it reads KMGKT. Lys-232 contributes to the ATP binding site. In terms of domain architecture, S4 RNA-binding spans 341 to 407; it reads KGILDILVET…KKSYNRIVIE (67 aa).

Belongs to the class-I aminoacyl-tRNA synthetase family. TyrS type 1 subfamily. In terms of assembly, homodimer.

The protein localises to the cytoplasm. The catalysed reaction is tRNA(Tyr) + L-tyrosine + ATP = L-tyrosyl-tRNA(Tyr) + AMP + diphosphate + H(+). In terms of biological role, catalyzes the attachment of tyrosine to tRNA(Tyr) in a two-step reaction: tyrosine is first activated by ATP to form Tyr-AMP and then transferred to the acceptor end of tRNA(Tyr). The chain is Tyrosine--tRNA ligase from Clostridium tetani (strain Massachusetts / E88).